The following is a 322-amino-acid chain: Tetrahydromethanopterin S-methyltransferase subunit H (322 aa).

Belongs to the MtrH family. The complex is composed of 8 subunits; MtrA, MtrB, MtrC, MtrD, MtrE, MtrF, MtrG and MtrH.

The enzyme catalyses 5-methyl-5,6,7,8-tetrahydromethanopterin + coenzyme M + 2 Na(+)(in) = 5,6,7,8-tetrahydromethanopterin + methyl-coenzyme M + 2 Na(+)(out). It participates in one-carbon metabolism; methanogenesis from CO(2); methyl-coenzyme M from 5,10-methylene-5,6,7,8-tetrahydromethanopterin: step 2/2. Its function is as follows. Part of a complex that catalyzes the formation of methyl-coenzyme M and tetrahydromethanopterin from coenzyme M and methyl-tetrahydromethanopterin. This is an energy-conserving, sodium-ion translocating step. MtrH catalyzes the transfer of the methyl group from methyl-tetrahydromethanopterin to the corrinoid prosthetic group of MtrA. In Methanopyrus kandleri (strain AV19 / DSM 6324 / JCM 9639 / NBRC 100938), this protein is Tetrahydromethanopterin S-methyltransferase subunit H.